Consider the following 199-residue polypeptide: dITP/XTP pyrophosphatase (199 aa).

Residue 8-13 coordinates substrate; that stretch reads TSNKNK. Residues Glu40 and Asp68 each contribute to the Mg(2+) site. Asp68 functions as the Proton acceptor in the catalytic mechanism. Substrate contacts are provided by residues Ser69, 154–157, Lys177, and 182–183; these read FGYD and HR.

It belongs to the HAM1 NTPase family. In terms of assembly, homodimer. Mg(2+) serves as cofactor.

It carries out the reaction XTP + H2O = XMP + diphosphate + H(+). The enzyme catalyses dITP + H2O = dIMP + diphosphate + H(+). It catalyses the reaction ITP + H2O = IMP + diphosphate + H(+). Pyrophosphatase that catalyzes the hydrolysis of nucleoside triphosphates to their monophosphate derivatives, with a high preference for the non-canonical purine nucleotides XTP (xanthosine triphosphate), dITP (deoxyinosine triphosphate) and ITP. Seems to function as a house-cleaning enzyme that removes non-canonical purine nucleotides from the nucleotide pool, thus preventing their incorporation into DNA/RNA and avoiding chromosomal lesions. The chain is dITP/XTP pyrophosphatase from Wigglesworthia glossinidia brevipalpis.